We begin with the raw amino-acid sequence, 165 residues long: Putative inactive neutral ceramidase B (165 aa).

This sequence belongs to the neutral ceramidase family. As to expression, ubiquitous. Expression is reduced with increasing age and in late-onset Alzheimer disease (LOAD) patients. This reduction is even more pronounced in patients with an affected mother.

The protein is Putative inactive neutral ceramidase B of Homo sapiens (Human).